The sequence spans 326 residues: Probable magnesium transporter NIPA7 (326 aa).

The Extracellular portion of the chain corresponds to Met-1–Asp-4. The chain crosses the membrane as a helical span at residues Asn-5–Leu-25. Residues Lys-26–Pro-51 lie on the Cytoplasmic side of the membrane. A helical transmembrane segment spans residues Leu-52–Val-72. Residues Tyr-73–Ala-76 are Extracellular-facing. Residues Val-77 to Leu-97 form a helical membrane-spanning segment. Residues Leu-98 to Lys-104 lie on the Cytoplasmic side of the membrane. The helical transmembrane segment at Met-105–Pro-125 threads the bilayer. The Extracellular portion of the chain corresponds to Gln-126 to Gln-142. Residues Pro-143 to Cys-163 traverse the membrane as a helical segment. Topologically, residues Glu-164–Gln-169 are cytoplasmic. A helical transmembrane segment spans residues Thr-170–Ile-190. The Extracellular segment spans residues Lys-191–Tyr-209. A helical membrane pass occupies residues Pro-210–Leu-230. Residues Asn-231–Ala-240 lie on the Cytoplasmic side of the membrane. Residues Ile-241–Met-261 traverse the membrane as a helical segment. Over Phe-262 to Ser-272 the chain is Extracellular. The helical transmembrane segment at Ile-273–Thr-293 threads the bilayer. Topologically, residues Arg-294–Tyr-326 are cytoplasmic.

The protein belongs to the NIPA (TC 2.A.7) family. In terms of assembly, homodimer.

Its subcellular location is the cell membrane. The protein localises to the early endosome. In terms of biological role, acts as a Mg(2+) transporter. Can also transport other divalent cations such as Fe(2+), Sr(2+), Ba(2+), Mn(2+) and Co(2+) but to a much less extent than Mg(2+). This chain is Probable magnesium transporter NIPA7, found in Arabidopsis thaliana (Mouse-ear cress).